Consider the following 253-residue polypeptide: 2-dehydro-3-deoxy-D-gluconate 5-dehydrogenase (253 aa).

Position 14–38 (14–38 (VVTGCDTGLGQGMALGLAQAGCDIV)) interacts with NAD(+). Ser145 provides a ligand contact to substrate. The active-site Proton acceptor is the Tyr158.

It belongs to the short-chain dehydrogenases/reductases (SDR) family. In terms of assembly, homotetramer.

The enzyme catalyses 2-dehydro-3-deoxy-D-gluconate + NAD(+) = 3-deoxy-D-glycero-2,5-hexodiulosonate + NADH + H(+). It carries out the reaction 4-pregnen-20,21-diol-3-one + NAD(+) = 21-hydroxyprogesterone + NADH + H(+). In terms of biological role, catalyzes the reversible reduction of 2,5-diketo-3-deoxygluconate (DKII or 4,6-dihydroxy-2,5-dioxohexanoate) into 2-keto-3-deoxygluconate (KDG or 2-dehydro-3-deoxygluconate) with a concomitant oxidation of NADH. To a lesser extent, can also reduce 5-keto-D-gluconate and oxidize D-gluconate and 1,2-propanediol. Together with KduI, seems to play a role in the catabolism of hexuronates under osmotic stress conditions, substituting for the regular hexuronate degrading enzymes UxaABC and UxuAB whose expression is repressed in these conditions. In vitro, also exhibits NADH-dependent 20-ketosteroid reductase activity against eukaryotic steroid hormone 11-deoxycorticosterone (11-DOC), which is converted into the product 4-pregnen-20,21-diol-3-one. In addition to 11-DOC, five other C21 steroid compounds (11-deoxycortisol, cortisol, corticosterone, cortisone, and 21-hydroxypregnenolone) are reduced by KduD, but steroids lacking the hydroxyl group at C21 position, such as pregnenolone, testosterone propionate, cortisone acetate, or progesterone, cannot be used as substrate. This Escherichia coli (strain K12) protein is 2-dehydro-3-deoxy-D-gluconate 5-dehydrogenase.